The sequence spans 510 residues: Glutamate decarboxylase (510 aa).

107 to 109 is a binding site for substrate; the sequence is QLS. Lys-322 bears the N6-(pyridoxal phosphate)lysine mark. Substrate is bound at residue Arg-483.

This sequence belongs to the group II decarboxylase family. Homodimer. Pyridoxal 5'-phosphate serves as cofactor. As to expression, expressed in the head (at protein level).

It carries out the reaction L-glutamate + H(+) = 4-aminobutanoate + CO2. Catalyzes the production of GABA. The polypeptide is Glutamate decarboxylase (Gad1) (Drosophila melanogaster (Fruit fly)).